The chain runs to 452 residues: tRNA pseudouridine synthase Pus10 (452 aa).

The THUMP domain maps to E71–P200. D269 (nucleophile) is an active-site residue. Residues Y335 and Y406 each coordinate substrate.

The protein belongs to the pseudouridine synthase Pus10 family.

The catalysed reaction is uridine(54) in tRNA = pseudouridine(54) in tRNA. It carries out the reaction uridine(55) in tRNA = pseudouridine(55) in tRNA. Its function is as follows. Responsible for synthesis of pseudouridine from uracil-54 and uracil-55 in the psi GC loop of transfer RNAs. The polypeptide is tRNA pseudouridine synthase Pus10 (Methanothrix thermoacetophila (strain DSM 6194 / JCM 14653 / NBRC 101360 / PT) (Methanosaeta thermophila)).